A 233-amino-acid chain; its full sequence is H-2 class II histocompatibility antigen, A-R alpha chain (233 aa).

Residues 1 to 88 form an alpha-1 region; the sequence is EDDIEADHVG…KRSNFTPAAN (88 aa). Topologically, residues 1-195 are extracellular; the sequence is EDDIEADHVG…IPAPMSELTE (195 aa). The alpha-2 stretch occupies residues 89–182; sequence EAPQATVFPK…GLEEPVLKHW (94 aa). The region spanning 91–183 is the Ig-like C1-type domain; that stretch reads PQATVFPKSP…LEEPVLKHWE (93 aa). A disulfide bridge connects residues Cys111 and Cys167. The N-linked (GlcNAc...) asparagine glycan is linked to Asn122. The segment at 183–195 is connecting peptide; it reads EPEIPAPMSELTE. A helical membrane pass occupies residues 196-221; sequence TVVCALGLSVGLVGIVVGTIFIIQGL. Topologically, residues 222 to 233 are cytoplasmic; the sequence is RSGGTSRHPGPL.

This sequence belongs to the MHC class II family.

It is found in the membrane. This chain is H-2 class II histocompatibility antigen, A-R alpha chain (H2-Aa), found in Mus musculus (Mouse).